Reading from the N-terminus, the 226-residue chain is uncharacterized protein (226 aa).

Residues 1–92 form the HTH arsR-type domain; the sequence is MNPNIAKISS…QLLHIAPKAK (92 aa). A DNA-binding region (H-T-H motif) is located at residues 32 to 55; the sequence is AGELAYLANIKPQTASFHLNKLLE.

This is an uncharacterized protein from Bacillus subtilis (strain 168).